A 98-amino-acid chain; its full sequence is Transcription elongation factor A protein-like 7 (98 aa).

Positions 1–22 (MQKSCNEKEGKPKGSEAKREDE) are enriched in basic and acidic residues. The interval 1 to 33 (MQKSCNEKEGKPKGSEAKREDEQPCGALEGQRL) is disordered. Residues 59-89 (GEEMTGEEEEMERCLEEIRSLRKKFRALHSN) are a coiled coil.

Belongs to the TFS-II family. TFA subfamily.

The protein localises to the nucleus. Its function is as follows. Plays a role in the negative regulation of NF-kappa-B signaling at the basal level by modulating transcriptional activity of NF-kappa-B on its target gene promoters. Associates with cyclin D1 promoter containing Myc E-box sequence and transcriptionally represses cyclin D1 expression. Regulates telomerase reverse transcriptase expression and telomerase activity in both ALT (alternative lengthening of telomeres)and telomerase-positive cell lines. This is Transcription elongation factor A protein-like 7 (Tceal7) from Mus musculus (Mouse).